The primary structure comprises 660 residues: Arginine--tRNA ligase, cytoplasmic (660 aa).

Methionine 1 is modified (N-acetylmethionine). A could be involved in the assembly of the multisynthetase complex region spans residues 1–72 (MDVLVSECSA…QAERNKPTKN (72 aa)). Residues 200-202 (SPN), histidine 211, tyrosine 384, aspartate 388, and glutamine 412 contribute to the L-arginine site. Positions 201–212 (PNIAKEMHVGHL) match the 'HIGH' region motif. Residues 529–543 (NTAAYLLYAFTRIRS) form an interaction with tRNA region.

This sequence belongs to the class-I aminoacyl-tRNA synthetase family. As to quaternary structure, interacts (via N-terminus) with AIMP1 (via N-terminus); this stimulates its catalytic activity. Interacts (via N-terminus) with LARS2 (via C-terminus). Monomer. Part of a multisubunit complex that groups tRNA ligases for Arg (RARS1), Asp (DARS1), Gln (QARS1), Ile (IARS1), Leu (LARS1), Lys (KARS1), Met (MARS1) the bifunctional ligase for Glu and Pro (EPRS1) and the auxiliary subunits AIMP1/p43, AIMP2/p38 and EEF1E1/p18. Interacts with QARS1. Part of a complex composed of RARS1, QARS1 and AIMP1.

Its subcellular location is the cytoplasm. It localises to the cytosol. It catalyses the reaction tRNA(Arg) + L-arginine + ATP = L-arginyl-tRNA(Arg) + AMP + diphosphate. Its function is as follows. Forms part of a macromolecular complex that catalyzes the attachment of specific amino acids to cognate tRNAs during protein synthesis. Modulates the secretion of AIMP1 and may be involved in generation of the inflammatory cytokine EMAP2 from AIMP1. In Homo sapiens (Human), this protein is Arginine--tRNA ligase, cytoplasmic.